Reading from the N-terminus, the 466-residue chain is Chromosomal replication initiator protein DnaA (466 aa).

The tract at residues 1–86 (MSLSLWQQCL…EVGTKPVTQT (86 aa)) is domain I, interacts with DnaA modulators. The tract at residues 86–129 (TLKTPVHNVVAPTQTTTAQPQRVAPAARSGWDNVPAPAEPTYRS) is domain II. Residues 130–346 (NVNVKHTFDN…GALNRVIANA (217 aa)) are domain III, AAA+ region. Positions 174, 176, 177, and 178 each coordinate ATP. Residues 347–466 (NFTGRAITID…FSNLIRTLSS (120 aa)) are domain IV, binds dsDNA.

This sequence belongs to the DnaA family. In terms of assembly, oligomerizes as a right-handed, spiral filament on DNA at oriC.

The protein localises to the cytoplasm. Plays an essential role in the initiation and regulation of chromosomal replication. ATP-DnaA binds to the origin of replication (oriC) to initiate formation of the DNA replication initiation complex once per cell cycle. Binds the DnaA box (a 9 base pair repeat at the origin) and separates the double-stranded (ds)DNA. Forms a right-handed helical filament on oriC DNA; dsDNA binds to the exterior of the filament while single-stranded (ss)DNA is stabiized in the filament's interior. The ATP-DnaA-oriC complex binds and stabilizes one strand of the AT-rich DNA unwinding element (DUE), permitting loading of DNA polymerase. After initiation quickly degrades to an ADP-DnaA complex that is not apt for DNA replication. Binds acidic phospholipids. The chain is Chromosomal replication initiator protein DnaA from Salmonella dublin (strain CT_02021853).